We begin with the raw amino-acid sequence, 593 residues long: UvrABC system protein C (593 aa).

Positions 13-91 (TTPGVYMMKD…IKEYRPKYNV (79 aa)) constitute a GIY-YIG domain. Residues 202–237 (DEIVEELKKKMFEYADNLMFEKAQEIKNKITSLEQI) enclose the UVR domain.

The protein belongs to the UvrC family. Interacts with UvrB in an incision complex.

Its subcellular location is the cytoplasm. The UvrABC repair system catalyzes the recognition and processing of DNA lesions. UvrC both incises the 5' and 3' sides of the lesion. The N-terminal half is responsible for the 3' incision and the C-terminal half is responsible for the 5' incision. The sequence is that of UvrABC system protein C from Caldicellulosiruptor saccharolyticus (strain ATCC 43494 / DSM 8903 / Tp8T 6331).